A 121-amino-acid chain; its full sequence is Phospholipase A2 homolog EPL_00195 (121 aa).

7 disulfide bridges follow: C25/C114, C27/C43, C42/C94, C48/C121, C49/C87, C56/C80, and C74/C85. Residues 104 to 116 are important for membrane-damaging activities in eukaryotes and bacteria; heparin-binding; that stretch reads KKYRIYPNFLCRG.

It belongs to the phospholipase A2 family. Group II subfamily. S49 sub-subfamily. Monomer. In terms of tissue distribution, expressed by the venom gland.

It is found in the secreted. Its function is as follows. Snake venom phospholipase A2 homolog that lacks enzymatic activity. Shows high myotoxin activities and displays edema-inducing activities. Has cytotoxic activities against HUVEC cells (LC(50)=2.5 uL) and human lung adenocarcinoma A549 cells (LC(50)=2.9 uL). The sequence is that of Phospholipase A2 homolog EPL_00195 from Echis pyramidum leakeyi (Leakey's carpet viper).